The chain runs to 114 residues: Large ribosomal subunit protein bL19 (114 aa).

Belongs to the bacterial ribosomal protein bL19 family.

In terms of biological role, this protein is located at the 30S-50S ribosomal subunit interface and may play a role in the structure and function of the aminoacyl-tRNA binding site. The sequence is that of Large ribosomal subunit protein bL19 from Thermoanaerobacter sp. (strain X514).